Reading from the N-terminus, the 149-residue chain is MKRPARPVLKLSLQFADASHRAQLPRHKVLRWIRAALDVPAEITVRIVGTDEGRALNRDYRQKDYATNVLTFDYEAEPVVVADLILCAPVVEREARDEGRSLEAHYAHLLVHGTLHAQGHDHEIEAEAQAMEARETEVLRALGYADPYA.

Residues His112, His116, and His122 each coordinate Zn(2+).

This sequence belongs to the endoribonuclease YbeY family. Zn(2+) serves as cofactor.

It is found in the cytoplasm. Its function is as follows. Single strand-specific metallo-endoribonuclease involved in late-stage 70S ribosome quality control and in maturation of the 3' terminus of the 16S rRNA. In Methylibium petroleiphilum (strain ATCC BAA-1232 / LMG 22953 / PM1), this protein is Endoribonuclease YbeY.